Reading from the N-terminus, the 81-residue chain is uncharacterized protein (81 aa).

This is an uncharacterized protein from Carnobacterium maltaromaticum (Carnobacterium piscicola).